Reading from the N-terminus, the 289-residue chain is MIKNYKLLLFTTFTLFFITFVSGSSILKANFYYKVDWENVQCFVPPCPKYTIQKLNTNEKSQKILDFIFPNGLNKTTLLGDESKTLIVLGTTQPSSKFPNNATDFLVTRVYKSLPLGNKQTSTDKYYMFGDNGTRCKTSPCPNIVAALLNVHSQEIINTISQPYEKNVGFLDSVWLSSKNIRSDDFGLIGQGTIKNGVISISNSFIYLPDPPIKCPELPLLKCVEGNSMTYSRDENRCLVSPRCTKFGVCTLSIPLCNKGYRLVSFPSTELNGCPKFFCDPEFVNKTHK.

The signal sequence occupies residues 1 to 23; that stretch reads MIKNYKLLLFTTFTLFFITFVSG. N-linked (GlcNAc...) asparagine glycosylation is found at Asn-74, Asn-101, Asn-132, and Asn-285.

It localises to the secreted. This is an uncharacterized protein from Dictyostelium discoideum (Social amoeba).